The sequence spans 430 residues: Mothers against decapentaplegic homolog 9 (430 aa).

The region spanning 16 to 140 (PAVKRLLGWK…YRRVETPVLP (125 aa)) is the MH1 domain. Zn(2+) is bound by residues C68, C113, C125, and H130. The tract at residues 186 to 222 (CPAPPSSPGHVFPQSPCPTSYPHSPGSPSESDSPYQH) is disordered. Positions 202-221 (CPTSYPHSPGSPSESDSPYQ) are enriched in polar residues. The region spanning 236–430 (WCSVAYYELN…SPHNPISSVS (195 aa)) is the MH2 domain.

It belongs to the dwarfin/SMAD family. In terms of assembly, interaction with the co-SMAD SMAD4. Interacts with PEBP2-alpha subunit. Interacts with RANBP3L. Phosphorylated on serine by BMP (bone morphogenetic proteins) type 1 receptor kinase and activin type I receptor-like kinases (ALK-2, ALK-3 and ALK-6).

It localises to the cytoplasm. Its subcellular location is the nucleus. Transcriptional modulator activated by BMP (bone morphogenetic proteins) type 1 receptor kinase. SMAD9 is a receptor-regulated SMAD (R-SMAD). Has been shown to be activated by activin type I receptor-like kinases (ALK-2, ALK-3, ALK-6) which stimulate heteromerization between SMAD9 and SMAD4. May play a role in osteoblast differentiation and maturation. This is Mothers against decapentaplegic homolog 9 (Smad9) from Mus musculus (Mouse).